The sequence spans 60 residues: Cytochrome c oxidase subunit 7, mitochondrial (60 aa).

The Mitochondrial matrix portion of the chain corresponds to 2–29 (ANKVIQLQKIFQSSTKPLWWRHPRSALY). The chain crosses the membrane as a helical span at residues 30-53 (LYPFYAIFAVAVVTPLLYIPNAIR). Topologically, residues 54-60 (GIKAKKA) are mitochondrial intermembrane.

This sequence belongs to the cytochrome c oxidase VIIa family. In terms of assembly, component of the cytochrome c oxidase (complex IV, CIV), a multisubunit enzyme composed of 12 subunits. The complex is composed of a catalytic core of 3 subunits COX1, COX2 and COX3, encoded in the mitochondrial DNA, and 9 supernumerary subunits COX4, COX5A (or COX5B), COX6, COX7, COX8, COX9, COX12, COX13 and COX26, which are encoded in the nuclear genome. The complex exists as a monomer or a dimer and forms supercomplexes (SCs) in the inner mitochondrial membrane with a dimer of ubiquinol-cytochrome c oxidoreductase (cytochrome b-c1 complex, complex III, CIII), resulting in 2 different assemblies (supercomplexes III(2)IV and III(2)IV(2)).

It is found in the mitochondrion inner membrane. It participates in energy metabolism; oxidative phosphorylation. Functionally, component of the cytochrome c oxidase, the last enzyme in the mitochondrial electron transport chain which drives oxidative phosphorylation. The respiratory chain contains 3 multisubunit complexes succinate dehydrogenase (complex II, CII), ubiquinol-cytochrome c oxidoreductase (cytochrome b-c1 complex, complex III, CIII) and cytochrome c oxidase (complex IV, CIV), that cooperate to transfer electrons derived from NADH and succinate to molecular oxygen, creating an electrochemical gradient over the inner membrane that drives transmembrane transport and the ATP synthase. Cytochrome c oxidase is the component of the respiratory chain that catalyzes the reduction of oxygen to water. Electrons originating from reduced cytochrome c in the intermembrane space (IMS) are transferred via the dinuclear copper A center (CU(A)) of COX2 and heme A of COX1 to the active site in COX1, a binuclear center (BNC) formed by heme A3 and copper B (CU(B)). The BNC reduces molecular oxygen to 2 water molecules using 4 electrons from cytochrome c in the IMS and 4 protons from the mitochondrial matrix. This is Cytochrome c oxidase subunit 7, mitochondrial (COX7) from Saccharomyces cerevisiae (strain ATCC 204508 / S288c) (Baker's yeast).